The following is a 344-amino-acid chain: MGHRTRMILVLTLVVMSIWGSDASAMQKTKFDAPLLTEKIATNRSIIVDIEGKGDYTSVQKAIDAVPVGNSNWIIVHVRKGIYKERVHIPENKPFIFMRGNGKGKTVIESSQSSVDNVASATFKVEANHFVAFGISIRNDAPVGMAFTSENQSVAAFVAADKVAFYHCAFYSLHNTLFDNKGRHYYHECYIQGSIDFIFGRATSIFNNCEIFVISDKRVKPYGSITAHHRESAEEKTGYVFIRGKVYGIDEVYLGRAKGPYSRVIFAKTYLSKTVVPDGWTNWSYHGSTQNLYHGEYKCHGPGAERQKRSDWAKDLTKQEVESFLSIDFIDGTSWLPVWLQEKF.

The N-terminal stretch at 1-23 (MGHRTRMILVLTLVVMSIWGSDA) is a signal peptide. N-linked (GlcNAc...) asparagine glycans are attached at residues asparagine 43 and asparagine 151. Glutamine 152 contacts substrate. Aspartate 196 functions as the Nucleophile in the catalytic mechanism. Arginine 256 lines the substrate pocket. The N-linked (GlcNAc...) asparagine glycan is linked to asparagine 282.

It belongs to the pectinesterase family. In terms of tissue distribution, expressed in flower buds.

The protein localises to the secreted. It localises to the cell wall. It carries out the reaction [(1-&gt;4)-alpha-D-galacturonosyl methyl ester](n) + n H2O = [(1-&gt;4)-alpha-D-galacturonosyl](n) + n methanol + n H(+). Its pathway is glycan metabolism; pectin degradation; 2-dehydro-3-deoxy-D-gluconate from pectin: step 1/5. Its function is as follows. Acts in the modification of cell walls via demethylesterification of cell wall pectin. The chain is Probable pectinesterase 67 (PME67) from Arabidopsis thaliana (Mouse-ear cress).